The primary structure comprises 434 residues: Beta-enolase (434 aa).

Ser2 is modified (N-acetylserine). 2 residues coordinate substrate: His158 and Glu167. The active-site Proton donor is the Glu210. Mg(2+)-binding residues include Asp245, Glu293, and Asp318. Glu293 and Asp318 together coordinate substrate. Lys343 functions as the Proton acceptor in the catalytic mechanism. Residues 370 to 373 and Lys394 contribute to the substrate site; that span reads SHRS.

This sequence belongs to the enolase family. Homodimer. Interacts with PNKD. Requires Mg(2+) as cofactor.

The protein resides in the cytoplasm. The enzyme catalyses (2R)-2-phosphoglycerate = phosphoenolpyruvate + H2O. It functions in the pathway carbohydrate degradation; glycolysis; pyruvate from D-glyceraldehyde 3-phosphate: step 4/5. In terms of biological role, glycolytic enzyme that catalyzes the conversion of 2-phosphoglycerate to phosphoenolpyruvate. The polypeptide is Beta-enolase (ENO3) (Gallus gallus (Chicken)).